A 341-amino-acid polypeptide reads, in one-letter code: tRNA N6-adenosine threonylcarbamoyltransferase (341 aa).

Positions 111 and 115 each coordinate Fe cation. Residues 134–138 (LVSGG), D167, G180, and N276 each bind substrate. D304 serves as a coordination point for Fe cation.

It belongs to the KAE1 / TsaD family. The cofactor is Fe(2+).

It localises to the cytoplasm. It catalyses the reaction L-threonylcarbamoyladenylate + adenosine(37) in tRNA = N(6)-L-threonylcarbamoyladenosine(37) in tRNA + AMP + H(+). Its function is as follows. Required for the formation of a threonylcarbamoyl group on adenosine at position 37 (t(6)A37) in tRNAs that read codons beginning with adenine. Is involved in the transfer of the threonylcarbamoyl moiety of threonylcarbamoyl-AMP (TC-AMP) to the N6 group of A37, together with TsaE and TsaB. TsaD likely plays a direct catalytic role in this reaction. The polypeptide is tRNA N6-adenosine threonylcarbamoyltransferase (Pseudomonas putida (strain ATCC 700007 / DSM 6899 / JCM 31910 / BCRC 17059 / LMG 24140 / F1)).